A 167-amino-acid polypeptide reads, in one-letter code: Putative C-type lectin-like domain family 1 (167 aa).

Residues 1–67 (MVSNFFHVIQ…KYDCPFSGTS (67 aa)) lie on the Cytoplasmic side of the membrane. A helical; Signal-anchor for type II membrane protein transmembrane segment spans residues 68 to 88 (FVVFSLFLICAMAGDVVYADI). At 89–167 (KTVRTSPLEL…DITAMVRFNI (79 aa)) the chain is on the extracellular side. Asn109, Asn140, and Asn149 each carry an N-linked (GlcNAc...) asparagine glycan. In terms of domain architecture, C-type lectin; atypical spans 116–167 (SCPAKDWKVHKGKCYWIAETKKSWNKSQNDCAINNSYLMVIQDITAMVRFNI).

As to expression, expressed in spleen, lymph node, and tonsil. Lower expression in peripheral blood, bone marrow, and colon. No expression detected in thymus. Highly expressed in dendritic and B-cells.

The protein localises to the cell membrane. In terms of biological role, may function in mediating immune cell-cell interactions. May act as a T-cell costimulatory molecule, enhancing anti-CD3-induced proliferation. May play a role in the interaction of dendritic cells with T-cells and the cells of the adaptive immune response. The sequence is that of Putative C-type lectin-like domain family 1 from Homo sapiens (Human).